The primary structure comprises 377 residues: 1-deoxy-D-xylulose 5-phosphate reductoisomerase (377 aa).

5 residues coordinate NADPH: Thr20, Gly21, Ile23, Asn46, and Asn115. Lys116 contributes to the 1-deoxy-D-xylulose 5-phosphate binding site. Residue Glu117 coordinates NADPH. Asp141 serves as a coordination point for Mn(2+). 1-deoxy-D-xylulose 5-phosphate is bound by residues Ser142, Glu143, Ser166, and His189. Glu143 serves as a coordination point for Mn(2+). Gly195 is an NADPH binding site. 1-deoxy-D-xylulose 5-phosphate is bound by residues Ser202, Asn207, Lys208, and Glu211. Glu211 is a binding site for Mn(2+).

It belongs to the DXR family. Requires Mg(2+) as cofactor. The cofactor is Mn(2+).

It catalyses the reaction 2-C-methyl-D-erythritol 4-phosphate + NADP(+) = 1-deoxy-D-xylulose 5-phosphate + NADPH + H(+). Its pathway is isoprenoid biosynthesis; isopentenyl diphosphate biosynthesis via DXP pathway; isopentenyl diphosphate from 1-deoxy-D-xylulose 5-phosphate: step 1/6. Catalyzes the NADPH-dependent rearrangement and reduction of 1-deoxy-D-xylulose-5-phosphate (DXP) to 2-C-methyl-D-erythritol 4-phosphate (MEP). In Malacoplasma penetrans (strain HF-2) (Mycoplasma penetrans), this protein is 1-deoxy-D-xylulose 5-phosphate reductoisomerase.